The chain runs to 258 residues: UPF0246 protein NTHI1156 (258 aa).

It belongs to the UPF0246 family.

The polypeptide is UPF0246 protein NTHI1156 (Haemophilus influenzae (strain 86-028NP)).